A 1078-amino-acid chain; its full sequence is Exportin-1 (1078 aa).

One can recognise an Importin N-terminal domain in the interval 34-100; sequence AQQVLTQFQA…RNYIVAVMIK (67 aa).

Belongs to the exportin family. In terms of assembly, interacts with php4.

The protein localises to the nucleus. In terms of biological role, receptor for the leucine-rich nuclear export signal (NES). This Schizosaccharomyces pombe (strain 972 / ATCC 24843) (Fission yeast) protein is Exportin-1 (xpo1).